A 204-amino-acid polypeptide reads, in one-letter code: LexA repressor (204 aa).

The H-T-H motif DNA-binding region spans 31–51 (VREIGQAVGLKSSSTVHTHLV). Catalysis depends on for autocatalytic cleavage activity residues serine 128 and lysine 165.

It belongs to the peptidase S24 family. In terms of assembly, homodimer.

The catalysed reaction is Hydrolysis of Ala-|-Gly bond in repressor LexA.. Functionally, represses a number of genes involved in the response to DNA damage (SOS response), including recA and lexA. In the presence of single-stranded DNA, RecA interacts with LexA causing an autocatalytic cleavage which disrupts the DNA-binding part of LexA, leading to derepression of the SOS regulon and eventually DNA repair. The protein is LexA repressor of Syntrophomonas wolfei subsp. wolfei (strain DSM 2245B / Goettingen).